We begin with the raw amino-acid sequence, 313 residues long: Ribosomal RNA small subunit methyltransferase H (313 aa).

S-adenosyl-L-methionine-binding positions include G35–H37, D55, F80, D102, and Q109.

It belongs to the methyltransferase superfamily. RsmH family.

It is found in the cytoplasm. It catalyses the reaction cytidine(1402) in 16S rRNA + S-adenosyl-L-methionine = N(4)-methylcytidine(1402) in 16S rRNA + S-adenosyl-L-homocysteine + H(+). In terms of biological role, specifically methylates the N4 position of cytidine in position 1402 (C1402) of 16S rRNA. This Shewanella sp. (strain MR-4) protein is Ribosomal RNA small subunit methyltransferase H.